The sequence spans 219 residues: AA11 family lytic polysaccharide monooxygenase A (219 aa).

Residues 1-18 (MMLSKVVMGLLTASLAAA) form the signal peptide. His-19 lines the Cu(+) pocket. 3 disulfide bridges follow: Cys-58/Cys-154, Cys-94/Cys-116, and Cys-185/Cys-218. Residue Asn-80 is glycosylated (N-linked (GlcNAc...) asparagine). His-89 contacts Cu(+).

The protein belongs to the polysaccharide monooxygenase AA11 family. The cofactor is Cu(2+).

Its function is as follows. Lytic polysaccharide monooxygenase (LPMO) that depolymerizes chitin via the oxidation of scissile beta-(1-4)-glycosidic bonds, yielding C1 or C4 oxidation products. Catalysis by LPMOs requires the reduction of the active-site copper from Cu(II) to Cu(I) by a reducing agent and H(2)O(2) or O(2) as a cosubstrate. Has considerable affinity for alpha-chitin and, more so, beta-chitin. Active toward both alpha-chitin and beta-chitin allomorphs and enhances chitin degradation by an endoacting chitinase, in particular for alpha-chitin, and so plays a role in fungal chitin turnover. The catalytic activity increases when supplying reactions with hydrogen peroxide, confirming that it has peroxygenase activity. Does not show activity on phosphoric acid-swollen cellulose (PASC), Avicel, tamarind xyloglucan, birchwood xylan, beechwood xylan, acetyl glucuronoxylan from aspen, ivory nut mannan, acetylated konjac glucomannan, potato starch, heparin, hyaluronic acid, and chitosan. This chain is AA11 family lytic polysaccharide monooxygenase A, found in Aspergillus fumigatus (strain CBS 144.89 / FGSC A1163 / CEA10) (Neosartorya fumigata).